We begin with the raw amino-acid sequence, 483 residues long: Zinc metalloproteinase/disintegrin (483 aa).

The signal sequence occupies residues 1–20 (MIQVLLVTLCLAAFPYQGSS). Positions 21–190 (IILESGNVND…KKASQLNLTP (170 aa)) are excised as a propeptide. In terms of domain architecture, Peptidase M12B spans 198–394 (RYIELVVVAD…HNPQCMLNEP (197 aa)). 2 residues coordinate Ca(2+): Glu201 and Asp285. 3 disulfide bridges follow: Cys309–Cys389, Cys349–Cys373, and Cys351–Cys356. His334 is a Zn(2+) binding site. Glu335 is an active-site residue. Zn(2+)-binding residues include His338 and His344. Cys389 and Asn392 together coordinate Ca(2+). Residues 395–418 (LRTDIVSTPVSGNELLETGEESDF) constitute a propeptide that is removed on maturation. Residues 402–483 (TPVSGNELLE…AGCPRNPFHA (82 aa)) form the Disintegrin domain. Disulfide bonds link Cys425–Cys448, Cys439–Cys445, Cys444–Cys469, and Cys457–Cys476. The Cell attachment site motif lies at 461–463 (RGD).

The protein belongs to the venom metalloproteinase (M12B) family. P-II subfamily. P-IId sub-subfamily. Homodimer; disulfide-linked (disintegrin). Requires Zn(2+) as cofactor. In terms of tissue distribution, expressed by the venom gland.

The protein localises to the secreted. In terms of biological role, impairs hemostasis in the envenomed animal. This protein has not been identified in the venom. Its function is as follows. Inhibits ADP-induced platelet aggregation. Binds and inhibits integrins GPIIb/GPIIIa (ITGA2B/ITGB3), alpha-5/beta-1 (ITGA5/ITGB1), alpha-V/beta-3 (ITGAV/ITGB3), and alpha-V/beta-5 (ITGAV/ITGB5). It blocks cancer cell adhesion (tested on human breast cancer cell line MDA-MB-435) to fibronectin and vitronectin and thus prevents invasion of cancer cells. The polypeptide is Zinc metalloproteinase/disintegrin (Agkistrodon contortrix contortrix (Southern copperhead)).